A 329-amino-acid chain; its full sequence is UDP-2,3-diacylglucosamine pyrophosphatase LpxG (329 aa).

The chain crosses the membrane as a helical span at residues 2–24 (FVSVGITASLTTILAAPVLTWVW). Positions 59, 61, 91, 123, 257, and 259 each coordinate a divalent metal cation.

Belongs to the metallophosphoesterase superfamily. LpxG family. It depends on Mn(2+) as a cofactor.

The protein localises to the cell inner membrane. It catalyses the reaction UDP-2,3-diacyl-alpha-D-glucosamine + H2O = 2,3-diacyl-alpha-D-glucosaminyl 1-phosphate + UMP + 2 H(+). It participates in glycolipid biosynthesis; lipid IV(A) biosynthesis. Its function is as follows. Hydrolyzes the pyrophosphate bond of UDP-2,3-diacylglucosamine to form 2,3-diacylglucosamine 1-phosphate (lipid X) and UMP by catalyzing the attack of water at the alpha-P atom. Involved in the biosynthesis of lipid A, a phosphorylated glycolipid that anchors the lipooligosaccharide (LOS) to the outer membrane of the cell. Can functionally complement lpxH deficiency in E.coli. Overexpression of LpxG results in toxic accumulation of lipid X and profoundly reduces the infectivity of C.trachomatis. Can utilize UDP-2-N,3-O-bis((3R)-3-hydroxytetradecanoyl)-alpha-D-glucosamine as substrate in vitro, but the substrate is likely UDP-2-N-((3R)-3-hydroxyicosanoyl),3-O-(tetradecanoyl)-alpha-D-glucosamine in vivo. The polypeptide is UDP-2,3-diacylglucosamine pyrophosphatase LpxG (Chlamydia trachomatis serovar D (strain ATCC VR-885 / DSM 19411 / UW-3/Cx)).